Consider the following 240-residue polypeptide: 7-cyano-7-deazaguanine synthase (240 aa).

18–28 is a binding site for ATP; the sequence is FSGGQDSTTCL. Zn(2+)-binding residues include C197, C206, C209, and C212.

The protein belongs to the QueC family. It depends on Zn(2+) as a cofactor.

The enzyme catalyses 7-carboxy-7-deazaguanine + NH4(+) + ATP = 7-cyano-7-deazaguanine + ADP + phosphate + H2O + H(+). It functions in the pathway purine metabolism; 7-cyano-7-deazaguanine biosynthesis. Functionally, catalyzes the ATP-dependent conversion of 7-carboxy-7-deazaguanine (CDG) to 7-cyano-7-deazaguanine (preQ(0)). This chain is 7-cyano-7-deazaguanine synthase, found in Shewanella baltica (strain OS223).